A 276-amino-acid chain; its full sequence is NADPH-dependent 7-cyano-7-deazaguanine reductase (276 aa).

Ile-83–Ser-85 provides a ligand contact to substrate. Ser-85–Lys-86 lines the NADPH pocket. Cys-184 functions as the Thioimide intermediate in the catalytic mechanism. Asp-191 (proton donor) is an active-site residue. Position 223 to 224 (His-223 to Glu-224) interacts with substrate. Arg-252–Gly-253 contacts NADPH.

This sequence belongs to the GTP cyclohydrolase I family. QueF type 2 subfamily. As to quaternary structure, homodimer.

It localises to the cytoplasm. The enzyme catalyses 7-aminomethyl-7-carbaguanine + 2 NADP(+) = 7-cyano-7-deazaguanine + 2 NADPH + 3 H(+). It participates in tRNA modification; tRNA-queuosine biosynthesis. Functionally, catalyzes the NADPH-dependent reduction of 7-cyano-7-deazaguanine (preQ0) to 7-aminomethyl-7-deazaguanine (preQ1). The chain is NADPH-dependent 7-cyano-7-deazaguanine reductase from Pseudomonas fluorescens (strain Pf0-1).